The sequence spans 557 residues: Probable asparagine synthetase [glutamine-hydrolyzing] (557 aa).

The active-site For GATase activity is the C2. In terms of domain architecture, Glutamine amidotransferase type-2 spans 2–188 (CGILAILNSL…PGHYFSSKTK (187 aa)). Residues 50–54 (RLAIV), 75–77 (NGE), and D101 each bind L-glutamine. In terms of domain architecture, Asparagine synthetase spans 217–466 (AIKEAFEQAV…LPSSVLWRQK (250 aa)). ATP contacts are provided by residues L239, I279, and 353 to 354 (SG). Residues 538-557 (WGASQDPSGRAQKVHLSTTE) form a disordered region.

It carries out the reaction L-aspartate + L-glutamine + ATP + H2O = L-asparagine + L-glutamate + AMP + diphosphate + H(+). Its pathway is amino-acid biosynthesis; L-asparagine biosynthesis; L-asparagine from L-aspartate (L-Gln route): step 1/1. This Dictyostelium discoideum (Social amoeba) protein is Probable asparagine synthetase [glutamine-hydrolyzing] (asns).